The following is a 446-amino-acid chain: Chromosomal replication initiator protein DnaA (446 aa).

The domain I, interacts with DnaA modulators stretch occupies residues 1–92; sequence MENISDLWNS…SQAEEEIDLP (92 aa). A domain II region spans residues 93-109; sequence PAKPNAAQDDSNHLPQS. The domain III, AAA+ region stretch occupies residues 110-326; the sequence is MLNPKYTFDT…GALIRVVAYS (217 aa). Residues glycine 154, glycine 156, lysine 157, and threonine 158 each coordinate ATP. Positions 327 to 446 are domain IV, binds dsDNA; the sequence is SLINKDINAD…QVEEINDILK (120 aa).

It belongs to the DnaA family. As to quaternary structure, oligomerizes as a right-handed, spiral filament on DNA at oriC.

It localises to the cytoplasm. Its function is as follows. Plays an essential role in the initiation and regulation of chromosomal replication. ATP-DnaA binds to the origin of replication (oriC) to initiate formation of the DNA replication initiation complex once per cell cycle. Binds the DnaA box (a 9 base pair repeat at the origin) and separates the double-stranded (ds)DNA. Forms a right-handed helical filament on oriC DNA; dsDNA binds to the exterior of the filament while single-stranded (ss)DNA is stabiized in the filament's interior. The ATP-DnaA-oriC complex binds and stabilizes one strand of the AT-rich DNA unwinding element (DUE), permitting loading of DNA polymerase. After initiation quickly degrades to an ADP-DnaA complex that is not apt for DNA replication. Binds acidic phospholipids. The chain is Chromosomal replication initiator protein DnaA from Bacillus anthracis (strain A0248).